We begin with the raw amino-acid sequence, 363 residues long: Ribosomal RNA large subunit methyltransferase M (363 aa).

S-adenosyl-L-methionine-binding positions include S190, 223–226 (CPGG), D242, D262, and D279. K308 serves as the catalytic Proton acceptor.

The protein belongs to the class I-like SAM-binding methyltransferase superfamily. RNA methyltransferase RlmE family. RlmM subfamily. Monomer.

The protein resides in the cytoplasm. It carries out the reaction cytidine(2498) in 23S rRNA + S-adenosyl-L-methionine = 2'-O-methylcytidine(2498) in 23S rRNA + S-adenosyl-L-homocysteine + H(+). In terms of biological role, catalyzes the 2'-O-methylation at nucleotide C2498 in 23S rRNA. This chain is Ribosomal RNA large subunit methyltransferase M, found in Vibrio atlanticus (strain LGP32) (Vibrio splendidus (strain Mel32)).